Consider the following 794-residue polypeptide: Signal transducer and activator of transcription 5A (794 aa).

Tyrosine 90 bears the Phosphotyrosine mark. At serine 129 the chain carries Phosphoserine. In terms of domain architecture, SH2 spans 589 to 686; it reads WNDGAILGFV…EVFSKYYTPV (98 aa). Position 682 is a phosphotyrosine (tyrosine 682). Tyrosine 694 is modified (phosphotyrosine; by JAK2). The interval 765–794 is disordered; that stretch reads EELLRRPNGQSGPLSPPPAGLFTPARGSLS.

This sequence belongs to the transcription factor STAT family. In terms of assembly, forms a homodimer or a heterodimer with a related family member. Binds NR3C1. Interacts with NCOA1 and SOCS7. Interacts with ERBB4. Interacts with EBF4. Interacts with CD69. In terms of processing, ISGylated. Post-translationally, tyrosine phosphorylated in response to KITLG/SCF, IL2, IL3, IL7, IL15, CSF2/GMCSF, GH1, PRL, EPO and THPO. Activated KIT promotes phosphorylation on tyrosine residues and subsequent translocation to the nucleus. Tyrosine phosphorylated in response to constitutively activated FGFR1, FGFR2, FGFR3 and FGFR4. Tyrosine phosphorylation is required for DNA-binding activity and dimerization. Serine phosphorylation is also required for maximal transcriptional activity. Tyrosine phosphorylated in response to signaling via activated FLT3; wild-type FLT3 results in much weaker phosphorylation than constitutively activated mutant FLT3. Alternatively, can be phosphorylated by JAK2 at Tyr-694. In terms of tissue distribution, found in mammary gland and, in lesser extent, in ovary, thymus, spleen, kidney, lung, muscle and adrenal gland.

The protein localises to the cytoplasm. It is found in the nucleus. In terms of biological role, carries out a dual function: signal transduction and activation of transcription. Mediates cellular responses to the cytokine KITLG/SCF and other growth factors. May mediate cellular responses to activated FGFR1, FGFR2, FGFR3 and FGFR4. Binds to the GAS element and activates PRL-induced transcription. Regulates the expression of milk proteins during lactation. In Ovis aries (Sheep), this protein is Signal transducer and activator of transcription 5A (STAT5A).